The chain runs to 573 residues: LysM domain-containing protein ARB_01155/01156 (573 aa).

Residues 1–18 form the signal peptide; that stretch reads MIPRNLISGLFLLPFVVA. N-linked (GlcNAc...) asparagine glycosylation is found at asparagine 46, asparagine 71, and asparagine 283. One can recognise a LysM domain in the interval 373 to 419; that stretch reads RYYEVVAGDQCNTIALHFGITVDAFLSLNTQIDERCSNLWIAYAYCV. The lysM domain stretch occupies residues 375–405; the sequence is YEVVAGDQCNTIALHFGITVDAFLSLNTQID.

It localises to the secreted. Functionally, might have a role in sequestration of chitin oligosaccharides (breakdown products of fungal cell walls that are released during invasion and act as triggers of host immunity) to dampen host defense. In Arthroderma benhamiae (strain ATCC MYA-4681 / CBS 112371) (Trichophyton mentagrophytes), this protein is LysM domain-containing protein ARB_01155/01156.